A 504-amino-acid chain; its full sequence is Beta-glucosidase 24 (504 aa).

The first 18 residues, methionine 1–serine 18, serve as a signal peptide directing secretion. A beta-D-glucoside is bound at residue glutamine 47. An N-linked (GlcNAc...) asparagine glycan is attached at asparagine 75. A beta-D-glucoside is bound by residues histidine 151 and asparagine 196–glutamate 197. Catalysis depends on glutamate 197, which acts as the Proton donor. Residues cysteine 216 and cysteine 224 are joined by a disulfide bond. Asparagine 329 carries N-linked (GlcNAc...) asparagine glycosylation. Tyrosine 340 is a binding site for a beta-D-glucoside. The N-linked (GlcNAc...) asparagine glycan is linked to asparagine 371. Glutamate 411 provides a ligand contact to a beta-D-glucoside. The active-site Nucleophile is glutamate 411. An N-linked (GlcNAc...) asparagine glycan is attached at asparagine 421. A beta-D-glucoside contacts are provided by residues tryptophan 460, glutamate 467 to tryptophan 468, and phenylalanine 476.

The protein belongs to the glycosyl hydrolase 1 family.

It carries out the reaction Hydrolysis of terminal, non-reducing beta-D-glucosyl residues with release of beta-D-glucose.. The protein is Beta-glucosidase 24 (BGLU24) of Oryza sativa subsp. japonica (Rice).